A 599-amino-acid chain; its full sequence is Sulfite reductase [NADPH] flavoprotein alpha-component (599 aa).

A Flavodoxin-like domain is found at 64-202 (ITLISASQTG…AAAEWRARVV (139 aa)). Residues 70–75 (SQTGNA), 117–120 (STQG), and 153–162 (LGDTSYEFFC) contribute to the FMN site. The FAD-binding FR-type domain maps to 234–448 (EAPLTATLSV…IEHNDNFRLP (215 aa)). Residues threonine 322, alanine 356, 386-389 (RLYS), 404-406 (TVG), tyrosine 410, and 419-422 (GGAS) contribute to the FAD site. NADP(+)-binding positions include 519-520 (SR), 525-529 (KIYVQ), and aspartate 561. Tyrosine 599 serves as a coordination point for FAD.

The protein belongs to the NADPH-dependent sulphite reductase flavoprotein subunit CysJ family. This sequence in the N-terminal section; belongs to the flavodoxin family. In the C-terminal section; belongs to the flavoprotein pyridine nucleotide cytochrome reductase family. As to quaternary structure, alpha(8)-beta(8). The alpha component is a flavoprotein, the beta component is a hemoprotein. Requires FAD as cofactor. It depends on FMN as a cofactor.

It catalyses the reaction hydrogen sulfide + 3 NADP(+) + 3 H2O = sulfite + 3 NADPH + 4 H(+). The protein operates within sulfur metabolism; hydrogen sulfide biosynthesis; hydrogen sulfide from sulfite (NADPH route): step 1/1. Component of the sulfite reductase complex that catalyzes the 6-electron reduction of sulfite to sulfide. This is one of several activities required for the biosynthesis of L-cysteine from sulfate. The flavoprotein component catalyzes the electron flow from NADPH -&gt; FAD -&gt; FMN to the hemoprotein component. This is Sulfite reductase [NADPH] flavoprotein alpha-component from Klebsiella pneumoniae subsp. pneumoniae (strain ATCC 700721 / MGH 78578).